Reading from the N-terminus, the 145-residue chain is Transcription antitermination protein NusB (145 aa).

Belongs to the NusB family.

Involved in transcription antitermination. Required for transcription of ribosomal RNA (rRNA) genes. Binds specifically to the boxA antiterminator sequence of the ribosomal RNA (rrn) operons. The protein is Transcription antitermination protein NusB of Citrifermentans bemidjiense (strain ATCC BAA-1014 / DSM 16622 / JCM 12645 / Bem) (Geobacter bemidjiensis).